The chain runs to 138 residues: Large ribosomal subunit protein uL16 (138 aa).

Belongs to the universal ribosomal protein uL16 family. Part of the 50S ribosomal subunit.

In terms of biological role, binds 23S rRNA and is also seen to make contacts with the A and possibly P site tRNAs. The sequence is that of Large ribosomal subunit protein uL16 from Mycoplasma genitalium (strain ATCC 33530 / DSM 19775 / NCTC 10195 / G37) (Mycoplasmoides genitalium).